A 381-amino-acid polypeptide reads, in one-letter code: MSQLQESAVLSLAKDLISRPSVTPLDEGCQSLMAERLSQAGFEIESMVFDDTTNMWARRGTQSPVFCFAGHTDVVPVGDLNRWHTPPFEPVVIDDYLHGRGAADMKGSLAAMLVATERFVNKHPDHQGSIAFLITSDEEGPFINGTTRVIDTLEARNEKITWSLVGEPSSTHKLGDIVKNGRRGSLTGNLTVKGIQGHVAYPHLADNPIHKAAPALDELARMKWDNGNEFFPPTSFQIANINGGTGASNVIPGALEVMFNFRYSTEVTAEILIERVLNILDAHGLDYDISWVYNGLPFLTGEGPLLEATKAAIKKVTGTDTDPQTSGGTSDGRFIAPTGAQVIEVGPVNATIHKVNECVKVSDLELLTDCYEAILENLLCK.

His71 contacts Zn(2+). Asp73 is an active-site residue. Asp104 is a binding site for Zn(2+). Glu138 serves as the catalytic Proton acceptor. Zn(2+)-binding residues include Glu139, Glu167, and His353.

It belongs to the peptidase M20A family. DapE subfamily. In terms of assembly, homodimer. Zn(2+) is required as a cofactor. Co(2+) serves as cofactor.

It catalyses the reaction N-succinyl-(2S,6S)-2,6-diaminopimelate + H2O = (2S,6S)-2,6-diaminopimelate + succinate. It participates in amino-acid biosynthesis; L-lysine biosynthesis via DAP pathway; LL-2,6-diaminopimelate from (S)-tetrahydrodipicolinate (succinylase route): step 3/3. In terms of biological role, catalyzes the hydrolysis of N-succinyl-L,L-diaminopimelic acid (SDAP), forming succinate and LL-2,6-diaminopimelate (DAP), an intermediate involved in the bacterial biosynthesis of lysine and meso-diaminopimelic acid, an essential component of bacterial cell walls. This is Succinyl-diaminopimelate desuccinylase from Shewanella pealeana (strain ATCC 700345 / ANG-SQ1).